A 356-amino-acid polypeptide reads, in one-letter code: Tyrosine recombinase XerS (356 aa).

The Core-binding (CB) domain maps to 16–121 (IMPWYVLDYY…ALSSLYKYLT (106 aa)). A Tyr recombinase domain is found at 169 to 354 (AFLDYVDKEY…VNDEQKNALD (186 aa)). Residues Arg-210, Lys-234, His-306, Arg-309, and His-332 contribute to the active site. Tyr-341 (O-(3'-phospho-DNA)-tyrosine intermediate) is an active-site residue.

This sequence belongs to the 'phage' integrase family. XerS subfamily.

The protein resides in the cytoplasm. FtsK is required for recombination. Its function is as follows. Site-specific tyrosine recombinase, which acts by catalyzing the cutting and rejoining of the recombining DNA molecules. Essential to convert dimers of the bacterial chromosome into monomers to permit their segregation at cell division. In Streptococcus equi subsp. zooepidemicus (strain MGCS10565), this protein is Tyrosine recombinase XerS.